The sequence spans 276 residues: MESTIGIDAGGTLTKIAYLNKKMQLAFEKVYSNEQNKIIDWLKNQTGIKQICITGGKAKQLQQLLSASYKIVELNEFEATLVGVRYILKKEKYDINNFVLTNIGTGTSIHYIYNDQYIRAGGTGVGGGTIMGLSKLLTNIDHFEDVIPLTKVGSRKELDITVGDIYGGILSPIDNSLTASNFGKAAITDSNYNSSDILATIQGLVGEVVTALSLQFAETKNIDHIIYIGSTLCNNIHLQNIISSYTKYQNKTPIFLRDGGNSGAIGALLYATNKKS.

An ATP-binding site is contributed by 8–15; that stretch reads DAGGTLTK. E76 acts as the Proton acceptor in catalysis. ATP contacts are provided by residues T105, 127–131, F143, and S230; that span reads GGTIM.

This sequence belongs to the type II pantothenate kinase family. In terms of assembly, homodimer.

It is found in the cytoplasm. The catalysed reaction is (R)-pantothenate + ATP = (R)-4'-phosphopantothenate + ADP + H(+). Its pathway is cofactor biosynthesis; coenzyme A biosynthesis; CoA from (R)-pantothenate: step 1/5. Functionally, catalyzes the phosphorylation of pantothenate (Pan), the first step in CoA biosynthesis. The chain is Type II pantothenate kinase from Bacillus anthracis.